The primary structure comprises 20 residues: GKPSRPRPAPIQPRPPHPRL.

Residues 1–20 (GKPSRPRPAPIQPRPPHPRL) are disordered.

This sequence belongs to the apidaecin family.

It is found in the secreted. Its function is as follows. Antimicrobial peptide active against many Gram-negative enterobacterial and plant-associated bacterial species. Not active against other bacterial species like H.pylori, P.mirabilis, B.pertussis or N.gonorrhoeae. Functionally, among others, also active against S.typhi. In terms of biological role, not active against S.typhi. This chain is Apidaecin 3+, found in Pimpla disparis (Parasitic wasp).